Reading from the N-terminus, the 210-residue chain is Large ribosomal subunit protein uL4 (210 aa).

A compositionally biased stretch (polar residues) spans 44–54 (KRQGTASTLTR). Residues 44-94 (KRQGTASTLTRSEVRGGGRKPYKQKGTGRARQGSIRTPLRPGGGVIFGPKP) are disordered. Over residues 60-71 (GGRKPYKQKGTG) the composition is skewed to basic residues.

This sequence belongs to the universal ribosomal protein uL4 family. In terms of assembly, part of the 50S ribosomal subunit.

Its function is as follows. One of the primary rRNA binding proteins, this protein initially binds near the 5'-end of the 23S rRNA. It is important during the early stages of 50S assembly. It makes multiple contacts with different domains of the 23S rRNA in the assembled 50S subunit and ribosome. Forms part of the polypeptide exit tunnel. The sequence is that of Large ribosomal subunit protein uL4 from Prochlorococcus marinus subsp. pastoris (strain CCMP1986 / NIES-2087 / MED4).